The following is an 85-amino-acid chain: Conotoxin Mi15a (85 aa).

An N-terminal signal peptide occupies residues 1–23; the sequence is MEKLTVLILVATVLLTIQVLGQS. A propeptide spanning residues 24 to 49 is cleaved from the precursor; the sequence is DRDKHLKRRPKQYATKRLSARMRGHR. Pyrrolidone carboxylic acid is present on glutamine 50.

This sequence belongs to the conotoxin O2 superfamily. Post-translationally, contains 4 disulfide bonds. In terms of tissue distribution, expressed by the venom duct.

Its subcellular location is the secreted. The protein is Conotoxin Mi15a of Conus miles (Soldier cone).